A 311-amino-acid chain; its full sequence is Pyrimidine-specific ribonucleoside hydrolase RihA (311 aa).

Histidine 240 is a catalytic residue.

Belongs to the IUNH family. RihA subfamily.

Functionally, hydrolyzes with equal efficiency cytidine or uridine to ribose and cytosine or uracil, respectively. This Escherichia coli O7:K1 (strain IAI39 / ExPEC) protein is Pyrimidine-specific ribonucleoside hydrolase RihA.